A 1196-amino-acid chain; its full sequence is Beta/alpha-amylase (1196 aa).

The N-terminal stretch at 1 to 35 (MTLYRSLWKKGCMLLLSLVLSLTAFIGSPSNTASA) is a signal peptide. Positions 36 to 454 (AVADDFQASV…IISKAKPDNN (419 aa)) are beta-amylase. Aspartate 76 is a substrate binding site. 2 residues coordinate Ca(2+): glutamate 83 and aspartate 87. 2 residues coordinate substrate: histidine 116 and aspartate 124. Cysteine 118 and cysteine 126 are oxidised to a cystine. Glutamate 170 contacts Ca(2+). Glutamate 198 (proton donor) is an active-site residue. Positions 314, 319, and 357 each coordinate substrate. Glutamate 394 serves as the catalytic Proton acceptor. Residues 395-396 (NA) and arginine 423 contribute to the substrate site. 2 repeats span residues 455 to 558 (GGTG…APAG) and 565 to 668 (GGTT…APSG). The span at 544-553 (NSGNAGTITS) shows a compositional bias: polar residues. The interval 544–566 (NSGNAGTITSGAPAGANPGDGGG) is disordered. Residues 669–1196 (SVLSVVTSTY…APKEVKVFTK (528 aa)) are alpha-amylase.

It in the N-terminal section; belongs to the glycosyl hydrolase 14 family. This sequence in the C-terminal section; belongs to the glycosyl hydrolase 13 family. Requires Ca(2+) as cofactor.

Its subcellular location is the secreted. The enzyme catalyses Hydrolysis of (1-&gt;4)-alpha-D-glucosidic linkages in polysaccharides so as to remove successive maltose units from the non-reducing ends of the chains.. The catalysed reaction is Endohydrolysis of (1-&gt;4)-alpha-D-glucosidic linkages in polysaccharides containing three or more (1-&gt;4)-alpha-linked D-glucose units.. Functionally, the precursor protein is proteolytically cleaved to produce multiform beta-amylases and a 48 kDa alpha-amylase after secretion. The polypeptide is Beta/alpha-amylase (Paenibacillus polymyxa (Bacillus polymyxa)).